The primary structure comprises 654 residues: tRNA 5-methylaminomethyl-2-thiouridine biosynthesis bifunctional protein MnmC (654 aa).

Positions Met-1–Val-236 are tRNA (mnm(5)s(2)U34)-methyltransferase. The FAD-dependent cmnm(5)s(2)U34 oxidoreductase stretch occupies residues Ile-262 to Lys-654.

It in the N-terminal section; belongs to the methyltransferase superfamily. tRNA (mnm(5)s(2)U34)-methyltransferase family. This sequence in the C-terminal section; belongs to the DAO family. FAD is required as a cofactor.

The protein resides in the cytoplasm. The enzyme catalyses 5-aminomethyl-2-thiouridine(34) in tRNA + S-adenosyl-L-methionine = 5-methylaminomethyl-2-thiouridine(34) in tRNA + S-adenosyl-L-homocysteine + H(+). In terms of biological role, catalyzes the last two steps in the biosynthesis of 5-methylaminomethyl-2-thiouridine (mnm(5)s(2)U) at the wobble position (U34) in tRNA. Catalyzes the FAD-dependent demodification of cmnm(5)s(2)U34 to nm(5)s(2)U34, followed by the transfer of a methyl group from S-adenosyl-L-methionine to nm(5)s(2)U34, to form mnm(5)s(2)U34. This chain is tRNA 5-methylaminomethyl-2-thiouridine biosynthesis bifunctional protein MnmC, found in Pseudomonas putida (strain GB-1).